The primary structure comprises 342 residues: C-X-C chemokine receptor type 6 (342 aa).

Residues 1–32 (MAEHDYHEDYGFSSFNDSSQEEHQDFLQFSKV) lie on the Extracellular side of the membrane. An N-linked (GlcNAc...) asparagine glycan is attached at Asn-16. A helical membrane pass occupies residues 33–59 (FLPCMYLVVFVCGLVGNSLVLVISIFY). The Cytoplasmic portion of the chain corresponds to 60–68 (HKLQSLTDV). The helical transmembrane segment at 69–89 (FLVNLPLADLVFVCTLPFWAY) threads the bilayer. Over 90-103 (AGIHEWVFGQVMCK) the chain is Extracellular. A disulfide bridge connects residues Cys-102 and Cys-180. Residues 104–125 (SLLGIYTINFYTSMLILTCITV) traverse the membrane as a helical segment. The Cytoplasmic portion of the chain corresponds to 126 to 143 (DRFIVVVKATKAYNQQAK). Residues 144–164 (RMTWGKVTSLLIWVISLLVSL) form a helical membrane-spanning segment. Topologically, residues 165–187 (PQIIYGNVFNLDKLICGYHDEAI) are extracellular. Residues 188 to 215 (STVVLATQMTLGFFLPLLTMIVCYSVII) traverse the membrane as a helical segment. The Cytoplasmic segment spans residues 216 to 231 (KTLLHAGGFQKHRSLK). The helical transmembrane segment at 232 to 259 (IIFLVMAVFLLTQMPFNLMKFIRSTHWE) threads the bilayer. At 260 to 275 (YYAMTSFHYTIMVTEA) the chain is on the extracellular side. Residues 276–293 (IAYLRACLNPVLYAFVSL) form a helical membrane-spanning segment. Topologically, residues 294–342 (KFRKNFWKLVKDIGCLPYLGVSHQWKSSEDNSKTFSASHNVEATSMFQL) are cytoplasmic.

Belongs to the G-protein coupled receptor 1 family. In terms of tissue distribution, expressed in lymphoid tissues and activated T cells.

It localises to the cell membrane. In terms of biological role, receptor for the C-X-C chemokine CXCL16. Used as a coreceptor by SIVs and by strains of HIV-2 and m-tropic HIV-1. In Homo sapiens (Human), this protein is C-X-C chemokine receptor type 6 (CXCR6).